Here is a 1673-residue protein sequence, read N- to C-terminus: Leucine-rich repeat- and IQ domain-containing protein 1 (1673 aa).

Disordered regions lie at residues 22-48 (ISIS…SDTD) and 189-208 (LEEK…KRTF). The stretch at 34-59 (NDSVSDTQSDSSDTDLLELPESVLHY) is one LRR 1 repeat. The stretch at 216–239 (QCWMRQFEVEKKHLEDLQKQDQDK) is one LRR 2 repeat. The IQ 1 domain occupies 291 to 320 (RYDAAVKIQATYRASVTYRKYSPIIKEQME). The segment at 324-374 (RRAQELKEKEAKIRQKEEEKRRRLEEEQRVEEEKKKKMLEERRRREREYEE) is disordered. Basic and acidic residues predominate over residues 326-374 (AQELKEKEAKIRQKEEEKRRRLEEEQRVEEEKKKKMLEERRRREREYEE). Residues 491-516 (LPKLKINENLSKNQCSEQPSDQEFNA) form an LRR 3 repeat. Disordered regions lie at residues 544-658 (ESDT…EEIP) and 679-702 (EGEA…GSHS). Composition is skewed to basic and acidic residues over residues 549–567 (TEEH…ETEK) and 588–602 (EETR…EIKE). The segment covering 603-629 (MTQQGGPSDENNSSPISMQKSLPSLTP) has biased composition (polar residues). The LRR 4 repeat unit spans residues 641–665 (LEEDQETDLKSERIEEIPEEGVLSC). A compositionally biased stretch (basic and acidic residues) spans 647-656 (TDLKSERIEE). LRR repeat units follow at residues 830–852 (CSNL…LSHC), 853–873 (TRLK…CENL), 874–894 (ENLS…GFDG), 895–919 (CTNL…SLKY), 921–939 (QELT…LCEA), 940–961 (PTIV…IGNC), 962–983 (GLLQ…LRNH), 984–1005 (VLLR…LSSC), 1007–1029 (LPLL…LFHL), 1030–1054 (VSLE…WFNA), and 1067–1090 (PVLQ…VLNG). Disordered stretches follow at residues 1163–1230 (AHEQ…HCEE) and 1308–1330 (PTTT…EERR). Polar residues-rich tracts occupy residues 1168–1226 (DVNT…PSTS) and 1308–1325 (PTTT…QTTS). 2 IQ domains span residues 1280-1309 (PTKA…MHPT) and 1340-1369 (REKA…AIKD). Residues 1378 to 1405 (EIDLEDFEFDEDALEKDWPALDSTGFPS) form an LRR 16 repeat.

This is Leucine-rich repeat- and IQ domain-containing protein 1 (Lrriq1) from Mus musculus (Mouse).